The primary structure comprises 326 residues: o-succinylbenzoate synthase (326 aa).

The Proton donor role is filled by K110. Residues D138, E165, and D188 each coordinate Mg(2+). K212 acts as the Proton acceptor in catalysis.

It belongs to the mandelate racemase/muconate lactonizing enzyme family. MenC type 1 subfamily. It depends on a divalent metal cation as a cofactor.

It catalyses the reaction (1R,6R)-6-hydroxy-2-succinyl-cyclohexa-2,4-diene-1-carboxylate = 2-succinylbenzoate + H2O. Its pathway is quinol/quinone metabolism; 1,4-dihydroxy-2-naphthoate biosynthesis; 1,4-dihydroxy-2-naphthoate from chorismate: step 4/7. It functions in the pathway quinol/quinone metabolism; menaquinone biosynthesis. In terms of biological role, converts 2-succinyl-6-hydroxy-2,4-cyclohexadiene-1-carboxylate (SHCHC) to 2-succinylbenzoate (OSB). The protein is o-succinylbenzoate synthase of Mycobacterium bovis (strain ATCC BAA-935 / AF2122/97).